Reading from the N-terminus, the 154-residue chain is Acidic phospholipase A2 1 (154 aa).

Residues 1–19 (MHPAHLLVLLGVCVSLLGA) form the signal peptide. The propeptide occupies 20-27 (ARIPPLPL). 7 cysteine pairs are disulfide-bonded: Cys38–Cys104, Cys54–Cys153, Cys56–Cys72, Cys71–Cys132, Cys78–Cys125, Cys88–Cys118, and Cys111–Cys123. The Ca(2+) site is built by Phe55, Gly57, and Gly59. His75 is a catalytic residue. Asp76 lines the Ca(2+) pocket. Asp126 is a catalytic residue.

This sequence belongs to the phospholipase A2 family. Group I subfamily. D49 sub-subfamily. In terms of assembly, monomer. Ca(2+) is required as a cofactor. Expressed by the venom gland.

The protein localises to the secreted. The catalysed reaction is a 1,2-diacyl-sn-glycero-3-phosphocholine + H2O = a 1-acyl-sn-glycero-3-phosphocholine + a fatty acid + H(+). Snake venom phospholipase A2 (PLA2) that shows moderate enzymatic activity and exhibits procoagulant activity. PLA2 catalyzes the calcium-dependent hydrolysis of the 2-acyl groups in 3-sn-phosphoglycerides. The sequence is that of Acidic phospholipase A2 1 from Pseudonaja textilis (Eastern brown snake).